The chain runs to 461 residues: MNNFGNEEFDCHFLDEGFTAKDILDQKINEVSSSDDKDAFYVADLGDILKKHLRWLKALPRVTPFYAVKCNDSKAIVKTLAATGTGFDCASKTEIQLVQSLGVPPERIIYANPCKQVSQIKYAANNGVQMMTFDSEVELMKVARAHPKAKLVLRIATDDSKAVCRLSVKFGATLRTSRLLLERAKELNIDVVGVSFHVGSGCTDPETFVQAISDARCVFDMGAEVGFSMYLLDIGGGFPGSEDVKLKFEEITGVINPALDKYFPSDSGVRIIAEPGRYYVASAFTLAVNIIAKKIVLKEQTGSDDEDESSEQTFMYYVNDGVYGSFNCILYDHAHVKPLLQKRPKPDEKYYSSSIWGPTCDGLDRIVERCDLPEMHVGDWMLFENMGAYTVAAASTFNGFQRPTIYYVMSGPAWQLMQQFQNPDFPPEVEEQDASTLPVSCAWESGMKRHRAACASASINV.

At lysine 69 the chain carries N6-(pyridoxal phosphate)lysine. Pyridoxal 5'-phosphate is bound by residues serine 200, glycine 237, and 274-277 (EPGR). Serine 303 bears the Phosphoserine; by CK2 mark. 331 to 332 (YD) lines the substrate pocket. Cysteine 360 (proton donor; shared with dimeric partner) is an active-site residue. Position 360 is an S-nitrosocysteine; in inhibited form (cysteine 360). Substrate is bound at residue aspartate 361. Tyrosine 389 contributes to the pyridoxal 5'-phosphate binding site.

Belongs to the Orn/Lys/Arg decarboxylase class-II family. Homodimer. Only the dimer is catalytically active, as the active sites are constructed of residues from both monomers. Does not form a heterodimer with AZIN2. It depends on pyridoxal 5'-phosphate as a cofactor. In terms of processing, S-Nitrosylation inhibits the enzyme. S-Nitrosylated in vitro on 4 cysteine residues.

It carries out the reaction L-ornithine + H(+) = putrescine + CO2. Its pathway is amine and polyamine biosynthesis; putrescine biosynthesis via L-ornithine pathway; putrescine from L-ornithine: step 1/1. With respect to regulation, inhibited by S-nitrosylation. Inhibited by antizymes (AZs) OAZ1, OAZ2 and OAZ3 in response to polyamine levels. AZs inhibit the assembly of the functional homodimer by binding to ODC monomers. Additionally, OAZ1 targets ODC monomers for ubiquitin-independent proteolytic destruction by the 26S proteasome. Inhibited by 1-amino-oxy-3-aminopropane (APA, an isosteric analog of putrescine). Irreversibly inhibited by alpha-difluoromethylornithine (DFMO). Catalyzes the first and rate-limiting step of polyamine biosynthesis that converts ornithine into putrescine, which is the precursor for the polyamines, spermidine and spermine. Polyamines are essential for cell proliferation and are implicated in cellular processes, ranging from DNA replication to apoptosis. The chain is Ornithine decarboxylase (ODC1) from Homo sapiens (Human).